Consider the following 288-residue polypeptide: Bifunctional protein FolD (288 aa).

NADP(+)-binding positions include 164-166 (GRS) and valine 230.

The protein belongs to the tetrahydrofolate dehydrogenase/cyclohydrolase family. Homodimer.

The catalysed reaction is (6R)-5,10-methylene-5,6,7,8-tetrahydrofolate + NADP(+) = (6R)-5,10-methenyltetrahydrofolate + NADPH. It carries out the reaction (6R)-5,10-methenyltetrahydrofolate + H2O = (6R)-10-formyltetrahydrofolate + H(+). It functions in the pathway one-carbon metabolism; tetrahydrofolate interconversion. Its function is as follows. Catalyzes the oxidation of 5,10-methylenetetrahydrofolate to 5,10-methenyltetrahydrofolate and then the hydrolysis of 5,10-methenyltetrahydrofolate to 10-formyltetrahydrofolate. This chain is Bifunctional protein FolD, found in Thermomicrobium roseum (strain ATCC 27502 / DSM 5159 / P-2).